Consider the following 467-residue polypeptide: Dynactin subunit 4 (467 aa).

N-acetylalanine is present on Ala2. Positions 152–172 form a coiled coil; that stretch reads QQLAQKEKVERDRKKLARRRN. Residue Ser203 is modified to Phosphoserine. Lys222 is covalently cross-linked (Glycyl lysine isopeptide (Lys-Gly) (interchain with G-Cter in SUMO2)). Residue Thr414 is modified to Phosphothreonine.

It belongs to the dynactin subunit 4 family. In terms of assembly, subunit of dynactin, a multiprotein complex part of a tripartite complex with dynein and a adapter, such as BICDL1, BICD2 or HOOK3. The dynactin complex is built around ACTR1A/ACTB filament and consists of an actin-related filament composed of a shoulder domain, a pointed end and a barbed end. Its length is defined by its flexible shoulder domain. The soulder is composed of 2 DCTN1 subunits, 4 DCTN2 and 2 DCTN3. The 4 DCNT2 (via N-terminus) bind the ACTR1A filament and act as molecular rulers to determine the length. The pointed end is important for binding dynein-dynactin cargo adapters. Consists of 4 subunits: ACTR10, DCNT4, DCTN5 and DCTN6. The barbed end is composed of a CAPZA1:CAPZB heterodimers, which binds ACTR1A/ACTB filament and dynactin and stabilizes dynactin. Interacts with ATP7B, but not ATP7A, in a copper-dependent manner. Interacts with ANK2; this interaction is required for localization at costameres. Interacts with N4BP2L1.

The protein localises to the cytoplasm. It localises to the cytoskeleton. It is found in the microtubule organizing center. Its subcellular location is the centrosome. The protein resides in the stress fiber. The protein localises to the cell cortex. It localises to the myofibril. It is found in the sarcomere. Part of the dynactin complex that activates the molecular motor dynein for ultra-processive transport along microtubules. This is Dynactin subunit 4 (Dctn4) from Mus musculus (Mouse).